A 344-amino-acid chain; its full sequence is uncharacterized protein (344 aa).

The first 19 residues, 1-19 (MRIIFYLTLLLFIFNKVKS), serve as a signal peptide directing secretion. Residues 323 to 344 (SATRNQISIMVLILSVLLVLIL) constitute a propeptide, removed in mature form.

It is found in the cell membrane. This is an uncharacterized protein from Dictyostelium discoideum (Social amoeba).